The primary structure comprises 973 residues: ATP-dependent DNA helicase homolog RECG1, chloroplastic/mitochondrial (973 aa).

The segment at 1–208 is sufficient for chloroplastic and mitochondrial trgeting; the sequence is MAAVTLSPCS…ATSEVEATSD (208 aa). Residues 174–200 are disordered; the sequence is LLQNDDSSDPREDILDDGSSFTSKTAT. A Helicase ATP-binding domain is found at 536-725; sequence DLKRPVPMNR…LYGDISLTQI (190 aa). Residue 549–556 coordinates ATP; it reads GDVGCGKT. The short motif at 655–658 is the DEQQ box element; the sequence is DEQQ. One can recognise a Helicase C-terminal domain in the interval 746–904; sequence GIKEVYSMML…GFYLANIDLL (159 aa).

It belongs to the helicase family. RecG subfamily. In terms of tissue distribution, expressed in most tissues, not seen in pollen, ovules or developing seeds.

The protein resides in the plastid. The protein localises to the chloroplast. Its subcellular location is the mitochondrion. It catalyses the reaction Couples ATP hydrolysis with the unwinding of duplex DNA by translocating in the 3'-5' direction.. The enzyme catalyses ATP + H2O = ADP + phosphate + H(+). Its function is as follows. Plays a critical role in recombination and DNA repair. Helps process Holliday junction (HJ) intermediates to mature products by catalyzing branch migration. Has replication fork regression activity, unwinds stalled or blocked replication forks to make a HJ that can be resolved. Has a DNA unwinding activity characteristic of a DNA helicase with 3'-5' polarity. In terms of biological role, plays a role in recombination surveillance and repair of double-stranded (ds)DNA breaks in the mitochondrion. May be able to dissociate D- and R-loops. Able to complement UV sensitivity of a recG deletion in E.coli. In Arabidopsis thaliana (Mouse-ear cress), this protein is ATP-dependent DNA helicase homolog RECG1, chloroplastic/mitochondrial.